The following is a 417-amino-acid chain: Snake venom metalloproteinase acutolysin-C (417 aa).

The first 20 residues, 1–20 (MIQVLLVTICLAALPYQGSS), serve as a signal peptide directing secretion. Positions 21 to 189 (IMLESGKVND…KRPSRLNLTP (169 aa)) are cleaved as a propeptide — activation peptide. Residues 197–392 (TSVNLQLIVD…KKPKCIHKKS (196 aa)) form the Peptidase M12B domain. 3 cysteine pairs are disulfide-bonded: Cys-308–Cys-387, Cys-349–Cys-371, and Cys-351–Cys-354. His-333 contributes to the Zn(2+) binding site. Glu-334 is an active-site residue. Zn(2+) contacts are provided by His-337 and His-343. Residues 393–417 (LKTDTVSTSVSGNEPLDDNVDGFHA) constitute a propeptide that is removed on maturation. The segment at 398 to 417 (VSTSVSGNEPLDDNVDGFHA) is disordered. Over residues 407–417 (PLDDNVDGFHA) the composition is skewed to acidic residues.

This sequence belongs to the venom metalloproteinase (M12B) family. P-I subfamily. As to quaternary structure, monomer. Requires Zn(2+) as cofactor. As to expression, expressed by the venom gland.

It localises to the secreted. This protein is an alkaline zinc metalloprotease from snake venom that possesses weak hemorrhagic activity. The chain is Snake venom metalloproteinase acutolysin-C from Deinagkistrodon acutus (Hundred-pace snake).